A 131-amino-acid polypeptide reads, in one-letter code: Urease subunit beta (131 aa).

A disordered region spans residues proline 100–alanine 131.

Belongs to the urease beta subunit family. Heterotrimer of UreA (gamma), UreB (beta) and UreC (alpha) subunits. Three heterotrimers associate to form the active enzyme.

It localises to the cytoplasm. The catalysed reaction is urea + 2 H2O + H(+) = hydrogencarbonate + 2 NH4(+). It participates in nitrogen metabolism; urea degradation; CO(2) and NH(3) from urea (urease route): step 1/1. The chain is Urease subunit beta from Kocuria rhizophila (strain ATCC 9341 / DSM 348 / NBRC 103217 / DC2201).